The sequence spans 282 residues: Undecaprenyl-diphosphatase (282 aa).

The next 8 membrane-spanning stretches (helical) occupy residues 1–21 (MNLF…FLPI), 40–60 (GAAF…IYFA), 89–109 (WMIA…KHEI), 112–132 (VLRS…VLVV), 153–173 (LSWT…IPGS), 196–216 (FSFL…LYQT), 228–248 (LNLA…IAFL), and 258–278 (GIFI…IGTG).

It belongs to the UppP family.

The protein localises to the cell inner membrane. The catalysed reaction is di-trans,octa-cis-undecaprenyl diphosphate + H2O = di-trans,octa-cis-undecaprenyl phosphate + phosphate + H(+). Functionally, catalyzes the dephosphorylation of undecaprenyl diphosphate (UPP). Confers resistance to bacitracin. The sequence is that of Undecaprenyl-diphosphatase from Chlorobaculum tepidum (strain ATCC 49652 / DSM 12025 / NBRC 103806 / TLS) (Chlorobium tepidum).